Consider the following 363-residue polypeptide: S-adenosylmethionine:tRNA ribosyltransferase-isomerase (363 aa).

It belongs to the QueA family. Monomer.

Its subcellular location is the cytoplasm. The enzyme catalyses 7-aminomethyl-7-carbaguanosine(34) in tRNA + S-adenosyl-L-methionine = epoxyqueuosine(34) in tRNA + adenine + L-methionine + 2 H(+). It participates in tRNA modification; tRNA-queuosine biosynthesis. Its function is as follows. Transfers and isomerizes the ribose moiety from AdoMet to the 7-aminomethyl group of 7-deazaguanine (preQ1-tRNA) to give epoxyqueuosine (oQ-tRNA). The polypeptide is S-adenosylmethionine:tRNA ribosyltransferase-isomerase (Mannheimia succiniciproducens (strain KCTC 0769BP / MBEL55E)).